Here is a 319-residue protein sequence, read N- to C-terminus: uncharacterized protein (319 aa).

This is an uncharacterized protein from Bacillus subtilis (strain 168).